Here is a 248-residue protein sequence, read N- to C-terminus: CKLF-like MARVEL transmembrane domain-containing protein 2 (248 aa).

Positions 1-63 (MAPKAAKGAK…KAVQPKHEVG (63 aa)) are disordered. Pro residues predominate over residues 12-22 (EPAPAPPPPGA). A compositionally biased stretch (basic and acidic residues) spans 23–63 (KPEEDKKDGKEPSDKPQKAVQDHKEPSDKPQKAVQPKHEVG). The 123-residue stretch at 82–204 (FWLLGHAEIK…DVCLQRNHFR (123 aa)) folds into the MARVEL domain. The next 3 membrane-spanning stretches (helical) occupy residues 116 to 136 (LIITMEISFFSFFILLYSFAI), 147 to 167 (ISDLFNDLIACAFLVGAVVFA), and 178 to 198 (YLLAVILIGAAGVFAFIDVCL). Positions 208–248 (AKKHMLVPPPGKEKGPQQGKGPEPAKPPEPGKPPGPAKGKK) are disordered. Pro residues predominate over residues 231 to 248 (PAKPPEPGKPPGPAKGKK).

This sequence belongs to the chemokine-like factor family. In terms of tissue distribution, highly expressed in testis.

The protein resides in the membrane. This is CKLF-like MARVEL transmembrane domain-containing protein 2 (CMTM2) from Homo sapiens (Human).